The primary structure comprises 217 residues: Probable GTP-binding protein EngB (217 aa).

Residues 32 to 205 (GTPQIAFAGR…RKIVYSLIET (174 aa)) form the EngB-type G domain. GTP-binding positions include 40 to 47 (GRSNAGKS), 67 to 71 (GKTKL), 85 to 88 (DLPG), 152 to 155 (TKID), and 184 to 186 (VSN). Mg(2+)-binding residues include Ser47 and Thr69.

The protein belongs to the TRAFAC class TrmE-Era-EngA-EngB-Septin-like GTPase superfamily. EngB GTPase family. Mg(2+) is required as a cofactor.

In terms of biological role, necessary for normal cell division and for the maintenance of normal septation. The polypeptide is Probable GTP-binding protein EngB (Leptospira interrogans serogroup Icterohaemorrhagiae serovar copenhageni (strain Fiocruz L1-130)).